The chain runs to 257 residues: Probable enoyl-CoA hydratase echA8 (257 aa).

The protein belongs to the enoyl-CoA hydratase/isomerase family.

The enzyme catalyses a (3S)-3-hydroxyacyl-CoA = a (2E)-enoyl-CoA + H2O. It catalyses the reaction a 4-saturated-(3S)-3-hydroxyacyl-CoA = a (3E)-enoyl-CoA + H2O. Functionally, could possibly oxidize fatty acids using specific components. The chain is Probable enoyl-CoA hydratase echA8 (echA8) from Mycobacterium leprae (strain TN).